Reading from the N-terminus, the 719-residue chain is T-cell immunomodulatory protein homolog (719 aa).

A signal peptide spans 1–32; it reads MYNFLSCKKKSIILQVLLIICTYNILLNFVNI. Over 33 to 677 the chain is Extracellular; that stretch reads FVNNNEKNHK…LSVNPSKKFY (645 aa). N144, N277, N410, N540, and N659 each carry an N-linked (GlcNAc...) asparagine glycan. A helical transmembrane segment spans residues 678–697; that stretch reads SILYITLICLSVIGVLIFIL. Residues 698-719 lie on the Cytoplasmic side of the membrane; it reads DRKEKVEDSKEELGFKSHFVIG.

Belongs to the TIP family.

The protein resides in the membrane. May protect the parasite against attack by the host immune system by immunomodulation. The chain is T-cell immunomodulatory protein homolog from Plasmodium falciparum (isolate 3D7).